Consider the following 640-residue polypeptide: Threonine--tRNA ligase (640 aa).

A TGS domain is found at 1-61 (MPTITLPDGS…ERDASLQIIT (61 aa)). The tract at residues 242 to 533 (DHRRIGKQLD…LIEHYAGAFP (292 aa)) is catalytic. C333, H384, and H510 together coordinate Zn(2+).

Belongs to the class-II aminoacyl-tRNA synthetase family. As to quaternary structure, homodimer. Requires Zn(2+) as cofactor.

The protein resides in the cytoplasm. It carries out the reaction tRNA(Thr) + L-threonine + ATP = L-threonyl-tRNA(Thr) + AMP + diphosphate + H(+). Its function is as follows. Catalyzes the attachment of threonine to tRNA(Thr) in a two-step reaction: L-threonine is first activated by ATP to form Thr-AMP and then transferred to the acceptor end of tRNA(Thr). Also edits incorrectly charged L-seryl-tRNA(Thr). This Stutzerimonas stutzeri (strain A1501) (Pseudomonas stutzeri) protein is Threonine--tRNA ligase.